Here is a 433-residue protein sequence, read N- to C-terminus: Enolase (433 aa).

Gln167 provides a ligand contact to (2R)-2-phosphoglycerate. Catalysis depends on Glu209, which acts as the Proton donor. 3 residues coordinate Mg(2+): Asp246, Glu291, and Asp318. 4 residues coordinate (2R)-2-phosphoglycerate: Lys343, Arg372, Ser373, and Lys394. Lys343 serves as the catalytic Proton acceptor.

Belongs to the enolase family. In terms of assembly, component of the RNA degradosome, a multiprotein complex involved in RNA processing and mRNA degradation. It depends on Mg(2+) as a cofactor.

The protein localises to the cytoplasm. It localises to the secreted. Its subcellular location is the cell surface. The catalysed reaction is (2R)-2-phosphoglycerate = phosphoenolpyruvate + H2O. The protein operates within carbohydrate degradation; glycolysis; pyruvate from D-glyceraldehyde 3-phosphate: step 4/5. Functionally, catalyzes the reversible conversion of 2-phosphoglycerate (2-PG) into phosphoenolpyruvate (PEP). It is essential for the degradation of carbohydrates via glycolysis. The polypeptide is Enolase (Shewanella frigidimarina (strain NCIMB 400)).